A 172-amino-acid polypeptide reads, in one-letter code: LOB domain-containing protein 4 (172 aa).

An LOB domain is found at 12–113 (SPCAACKLLR…AQLALAQAEV (102 aa)). The interval 125–152 (PGHGLCPDSPSSSGSPSSKQVSPQDNKG) is disordered. Over residues 131 to 147 (PDSPSSSGSPSSKQVSP) the composition is skewed to low complexity.

It belongs to the LOB domain-containing protein family. As to expression, expressed in young shoots, roots, stems, leaves and flowers.

The chain is LOB domain-containing protein 4 (LBD4) from Arabidopsis thaliana (Mouse-ear cress).